A 392-amino-acid polypeptide reads, in one-letter code: Gastricsin (392 aa).

Residues 1–16 form the signal peptide; it reads MKWMVVALLCLPLLEA. Residues 17–62 constitute a propeptide, activation peptide; it reads ALIRVPLKKMKSIRETMKEQGVLKDFLKNHKYDPGQKYHFGKFGDY. The region spanning 76–389 is the Peptidase A1 domain; it reads YYGEISIGTP…DMGNNRVGLA (314 aa). Residue aspartate 94 is part of the active site. Cystine bridges form between cysteine 107/cysteine 112 and cysteine 270/cysteine 275. Aspartate 280 is a catalytic residue. Cysteine 314 and cysteine 347 form a disulfide bridge.

Belongs to the peptidase A1 family.

It is found in the secreted. It carries out the reaction More restricted specificity than pepsin A, but shows preferential cleavage at Tyr-|-Xaa bonds. High activity on hemoglobin.. Hydrolyzes a variety of proteins. The sequence is that of Gastricsin (Pgc) from Mus musculus (Mouse).